We begin with the raw amino-acid sequence, 342 residues long: Ribosomal RNA small subunit methyltransferase C (342 aa).

The protein belongs to the methyltransferase superfamily. RsmC family. In terms of assembly, monomer.

It localises to the cytoplasm. The catalysed reaction is guanosine(1207) in 16S rRNA + S-adenosyl-L-methionine = N(2)-methylguanosine(1207) in 16S rRNA + S-adenosyl-L-homocysteine + H(+). Specifically methylates the guanine in position 1207 of 16S rRNA in the 30S particle. This chain is Ribosomal RNA small subunit methyltransferase C, found in Shewanella sp. (strain MR-4).